The primary structure comprises 500 residues: Probable glycine dehydrogenase (decarboxylating) subunit 2 (500 aa).

Lysine 273 carries the N6-(pyridoxal phosphate)lysine modification.

The protein belongs to the GcvP family. C-terminal subunit subfamily. The glycine cleavage system is composed of four proteins: P, T, L and H. In this organism, the P 'protein' is a heterodimer of two subunits. Pyridoxal 5'-phosphate is required as a cofactor.

It catalyses the reaction N(6)-[(R)-lipoyl]-L-lysyl-[glycine-cleavage complex H protein] + glycine + H(+) = N(6)-[(R)-S(8)-aminomethyldihydrolipoyl]-L-lysyl-[glycine-cleavage complex H protein] + CO2. The glycine cleavage system catalyzes the degradation of glycine. The P protein binds the alpha-amino group of glycine through its pyridoxal phosphate cofactor; CO(2) is released and the remaining methylamine moiety is then transferred to the lipoamide cofactor of the H protein. The protein is Probable glycine dehydrogenase (decarboxylating) subunit 2 of Rhodopirellula baltica (strain DSM 10527 / NCIMB 13988 / SH1).